The following is a 419-amino-acid chain: L-rhamnose isomerase (419 aa).

Residues H262, D294, and D296 each coordinate Mn(2+).

This sequence belongs to the rhamnose isomerase family. As to quaternary structure, homotetramer. Requires Mn(2+) as cofactor.

It is found in the cytoplasm. It catalyses the reaction L-rhamnopyranose = L-rhamnulose. It participates in carbohydrate degradation; L-rhamnose degradation; glycerone phosphate from L-rhamnose: step 1/3. Its function is as follows. Catalyzes the interconversion of L-rhamnose and L-rhamnulose. In Escherichia coli O157:H7, this protein is L-rhamnose isomerase.